The chain runs to 1117 residues: Endogenous retrovirus group K member 9 Pol protein (1117 aa).

Glycine 2 carries N-myristoyl glycine lipidation. The Reverse transcriptase domain occupies 58–195 (KDWKRIGKEL…AGQVPVTLQP (138 aa)). Positions 165 to 264 (GKGPELVGPS…APPSRQGSEL (100 aa)) are disordered. Pro residues predominate over residues 232 to 247 (GMPPAPQGRAPYPQPP). CCHC-type zinc fingers lie at residues 544–561 (GKCY…NCPV) and 580–597 (DLCP…QCRS). The tract at residues 598–629 (KFDKNGQPLSGNEQRGQPQAPQQTGAFPIQPF) is disordered. Polar residues predominate over residues 604 to 622 (QPLSGNEQRGQPQAPQQTG). One can recognise a Peptidase A2 domain in the interval 800 to 875 (FEGLVDTGAD…IPLNLWGRDL (76 aa)). The active site involves aspartate 805. The G-patch domain maps to 890–936 (YSPTSQKIMTKRGYIPGKGLGKNEDGIKIPFEAKINQKREGIGYPFL).

The protein belongs to the beta type-B retroviral polymerase family. HERV class-II K(HML-2) pol subfamily. In terms of processing, myristoylation is essential for retroviral assembly. Alteration of the glycine residue leads to a block in the budding of particles and an accumulation of Gag inside the cell. Specific enzymatic cleavages may yield mature proteins.

It is found in the cell membrane. It catalyses the reaction Processing at the authentic HIV-1 PR recognition site and release of the mature p17 matrix and the p24 capsid protein, as a result of the cleavage of the -SQNY-|-PIVQ- cleavage site.. The catalysed reaction is DNA(n) + a 2'-deoxyribonucleoside 5'-triphosphate = DNA(n+1) + diphosphate. It carries out the reaction Endonucleolytic cleavage to 5'-phosphomonoester.. In terms of biological role, the products of the Gag polyproteins of infectious retroviruses perform highly complex orchestrated tasks during the assembly, budding, maturation, and infection stages of the viral replication cycle. During viral assembly, the proteins form membrane associations and self-associations that ultimately result in budding of an immature virion from the infected cell. Gag precursors also function during viral assembly to selectively bind and package two plus strands of genomic RNA. Endogenous Gag proteins may have kept, lost or modified their original function during evolution. Functionally, early post-infection, the reverse transcriptase converts the viral RNA genome into double-stranded viral DNA. The RNase H domain of the reverse transcriptase performs two functions. It degrades the RNA template and specifically removes the RNA primer from the RNA/DNA hybrid. Following nuclear import, the integrase catalyzes the insertion of the linear, double-stranded viral DNA into the host cell chromosome. Endogenous Pol proteins may have kept, lost or modified their original function during evolution. The polypeptide is Endogenous retrovirus group K member 9 Pol protein (ERVK-9) (Homo sapiens (Human)).